Reading from the N-terminus, the 887-residue chain is Degenerin-like protein unc-105 (887 aa).

The segment at 1–33 (MAEDRIKSKLRRPASIESTMSSRTKPRHKPSPM) is disordered. Residues 1–93 (MAEDRIKSKL…AATADGKWRW (93 aa)) are Cytoplasmic-facing. Residues 94 to 114 (FWYTAFTICLLALLIQIFFLI) form a helical membrane-spanning segment. Residues 115 to 698 (SKYRQYGKTV…SVLADLGGLT (584 aa)) lie on the Extracellular side of the membrane. Residues Asn244, Asn450, Asn473, Asn581, and Asn599 are each glycosylated (N-linked (GlcNAc...) asparagine). Residues 699–719 (GLWIGASVVSLLEIVTLIVFA) traverse the membrane as a helical segment. Topologically, residues 720-887 (TQAYVRKRKG…YSAPYEHRKK (168 aa)) are cytoplasmic. 2 disordered regions span residues 794–815 (AIQEQSDDEEETTESSRTNGSC) and 859–887 (SNSEEEDAEDEVHREPEPFYSAPYEHRKK).

It belongs to the amiloride-sensitive sodium channel (TC 1.A.6) family. As to expression, expressed in body wall muscle.

The protein localises to the membrane. Its function is as follows. Ion channel which is permeable to small monovalent cations. Shown not to be H+-ion gated. May be mechanosensitive and is required for growth and muscle development. The sequence is that of Degenerin-like protein unc-105 (unc-105) from Caenorhabditis elegans.